We begin with the raw amino-acid sequence, 142 residues long: Large ribosomal subunit protein uL13 (142 aa).

Belongs to the universal ribosomal protein uL13 family. As to quaternary structure, part of the 50S ribosomal subunit.

This protein is one of the early assembly proteins of the 50S ribosomal subunit, although it is not seen to bind rRNA by itself. It is important during the early stages of 50S assembly. The chain is Large ribosomal subunit protein uL13 from Polynucleobacter asymbioticus (strain DSM 18221 / CIP 109841 / QLW-P1DMWA-1) (Polynucleobacter necessarius subsp. asymbioticus).